The following is a 635-amino-acid chain: Paraneoplastic antigen-like protein 8B (635 aa).

Disordered regions lie at residues 115–202 (PTQA…DESL), 260–332 (TDKS…NPEF), and 492–635 (AARE…PKCR). Residues 133 to 147 (SETQAQDSGEVTGQA) show a composition bias toward polar residues. Positions 156 to 183 (NPRRGRRGRRNRTRRNRLTQKGKKRSRG) are enriched in basic residues. The span at 261 to 273 (DKSKKEEAEKEPA) shows a compositional bias: basic and acidic residues. 2 stretches are compositionally biased toward acidic residues: residues 302–329 (PDEEPVDSDTSESDSQESGDQETEELDN) and 502–524 (GSEEASDEQSEEESEDTESEASE). Residues 531–540 (RKPRAKRART) show a composition bias toward basic residues. Positions 541–557 (APRGLTPAGAPPTASGA) are enriched in low complexity. Composition is skewed to basic residues over residues 558 to 568 (RKTRAGGRGRG) and 619 to 635 (ARGKKARRGRRLPPKCR).

It belongs to the PNMA family.

This chain is Paraneoplastic antigen-like protein 8B, found in Homo sapiens (Human).